A 258-amino-acid chain; its full sequence is 3-deoxy-manno-octulosonate cytidylyltransferase (258 aa).

Belongs to the KdsB family.

It is found in the cytoplasm. It catalyses the reaction 3-deoxy-alpha-D-manno-oct-2-ulosonate + CTP = CMP-3-deoxy-beta-D-manno-octulosonate + diphosphate. Its pathway is nucleotide-sugar biosynthesis; CMP-3-deoxy-D-manno-octulosonate biosynthesis; CMP-3-deoxy-D-manno-octulosonate from 3-deoxy-D-manno-octulosonate and CTP: step 1/1. The protein operates within bacterial outer membrane biogenesis; lipopolysaccharide biosynthesis. Functionally, activates KDO (a required 8-carbon sugar) for incorporation into bacterial lipopolysaccharide in Gram-negative bacteria. The chain is 3-deoxy-manno-octulosonate cytidylyltransferase from Parvibaculum lavamentivorans (strain DS-1 / DSM 13023 / NCIMB 13966).